We begin with the raw amino-acid sequence, 244 residues long: Extracellular superoxide dismutase [Cu-Zn] (244 aa).

The N-terminal stretch at 1–18 (MLALVCSCLLLAALPADT) is a signal peptide. Disulfide bonds link cysteine 67/cysteine 212 and cysteine 129/cysteine 211. Asparagine 111 carries N-linked (GlcNAc...) asparagine glycosylation. Cu cation-binding residues include histidine 118, histidine 120, and histidine 135. Residues histidine 135, histidine 143, histidine 146, and aspartate 149 each coordinate Zn(2+). Histidine 185 provides a ligand contact to Cu cation. Positions 221–244 (PWARQAQEHAERKKRRRESECKAA) are disordered. Basic and acidic residues predominate over residues 226–244 (AQEHAERKKRRRESECKAA).

This sequence belongs to the Cu-Zn superoxide dismutase family. As to quaternary structure, homotetramer. Directly interacts with ATP7A; this interaction is copper-dependent and is required for SOD3 activity. Requires Cu cation as cofactor. Zn(2+) is required as a cofactor.

The protein localises to the secreted. The protein resides in the extracellular space. Its subcellular location is the golgi apparatus. It localises to the trans-Golgi network. The enzyme catalyses 2 superoxide + 2 H(+) = H2O2 + O2. Its function is as follows. Protect the extracellular space from toxic effect of reactive oxygen intermediates by converting superoxide radicals into hydrogen peroxide and oxygen. The chain is Extracellular superoxide dismutase [Cu-Zn] (SOD3) from Oryctolagus cuniculus (Rabbit).